The sequence spans 435 residues: Probable glycine dehydrogenase (decarboxylating) subunit 1 (435 aa).

It belongs to the GcvP family. N-terminal subunit subfamily. The glycine cleavage system is composed of four proteins: P, T, L and H. In this organism, the P 'protein' is a heterodimer of two subunits.

It carries out the reaction N(6)-[(R)-lipoyl]-L-lysyl-[glycine-cleavage complex H protein] + glycine + H(+) = N(6)-[(R)-S(8)-aminomethyldihydrolipoyl]-L-lysyl-[glycine-cleavage complex H protein] + CO2. In terms of biological role, the glycine cleavage system catalyzes the degradation of glycine. The P protein binds the alpha-amino group of glycine through its pyridoxal phosphate cofactor; CO(2) is released and the remaining methylamine moiety is then transferred to the lipoamide cofactor of the H protein. In Coprothermobacter proteolyticus (strain ATCC 35245 / DSM 5265 / OCM 4 / BT), this protein is Probable glycine dehydrogenase (decarboxylating) subunit 1.